A 428-amino-acid polypeptide reads, in one-letter code: Dihydroorotase (428 aa).

Residues histidine 61 and histidine 63 each contribute to the Zn(2+) site. Residues 63–65 and asparagine 95 contribute to the substrate site; that span reads HLR. Zn(2+) contacts are provided by aspartate 153, histidine 180, and histidine 233. Asparagine 279 provides a ligand contact to substrate. Aspartate 306 lines the Zn(2+) pocket. Aspartate 306 is a catalytic residue. Substrate contacts are provided by residues histidine 310 and 324–325; that span reads FG.

The protein belongs to the metallo-dependent hydrolases superfamily. DHOase family. Class I DHOase subfamily. The cofactor is Zn(2+).

It catalyses the reaction (S)-dihydroorotate + H2O = N-carbamoyl-L-aspartate + H(+). The protein operates within pyrimidine metabolism; UMP biosynthesis via de novo pathway; (S)-dihydroorotate from bicarbonate: step 3/3. Catalyzes the reversible cyclization of carbamoyl aspartate to dihydroorotate. In Geobacillus thermodenitrificans (strain NG80-2), this protein is Dihydroorotase.